The chain runs to 189 residues: MIRFEIHGDNLTITDAIRNYIEEKVGKLERYFNNVPNAVAHVRVKTYSNSTTKIEVTIPLKDVTLRAEERHDDLYAGIDLITNKLERQVRKYKTRVNRKHRDRGDQDIFVAEVQESTTNNHADDIESENDIEIIRSKQFSLKPMDSEEAVLQMNLLGHDFFIFTDRETDGTSIVYRRKDGKYGLIETTE.

Belongs to the HPF/YfiA ribosome-associated protein family. Long HPF subfamily. As to quaternary structure, interacts with 100S ribosomes.

The protein resides in the cytoplasm. Its function is as follows. Required for dimerization of active 70S ribosomes into 100S ribosomes in stationary phase; 100S ribosomes are translationally inactive and sometimes present during exponential growth. This chain is Ribosome hibernation promotion factor, found in Staphylococcus epidermidis (strain ATCC 35984 / DSM 28319 / BCRC 17069 / CCUG 31568 / BM 3577 / RP62A).